Reading from the N-terminus, the 413-residue chain is Prophage integrase IntA (413 aa).

Residues 105-186 enclose the Core-binding (CB) domain; sequence NTFLLVAERW…RINEVMIYAQ (82 aa). In terms of domain architecture, Tyr recombinase spans 209–386; sequence KNMPSIRPDQ…DYLEQRRPMM (178 aa). Catalysis depends on residues Arg-248, Lys-275, His-337, Arg-340, and His-363. Tyr-373 serves as the catalytic O-(3'-phospho-DNA)-tyrosine intermediate.

The protein belongs to the 'phage' integrase family.

Its function is as follows. Integrase is necessary for integration of the phage into the host genome by site-specific recombination. In conjunction with excisionase, integrase is also necessary for excision of the prophage from the host genome. Part of the cryptic P4-like prophage CP4-57, it excises the prophage when overexpressed, which also requires integration host factor (encoded by ihfA and ihfB). Overexpression of AlpA leads to excision of the CP4-57 prophage, which inactivates ssrA (the gene upstream of the prophage) that encodes tmRNA which is required to rescue stalled ribosomes in a process known as trans-translation. The chain is Prophage integrase IntA (intA) from Escherichia coli (strain K12).